The sequence spans 125 residues: MPTSNQSIRHGREKKRRTDRTRALEKCPQKRGVCLRVSTRTPKKPNSALRKIAKVRLSNRHDIFAYIPGEGHNLQEHSMVLIRGGRVKDLPGVKFHRIRGVKDLLGIPGRKRGRSKYGAERPKSK.

Positions 1 to 24 (MPTSNQSIRHGREKKRRTDRTRAL) are disordered. The segment covering 9-19 (RHGREKKRRTD) has biased composition (basic residues).

It belongs to the universal ribosomal protein uS12 family.

It is found in the mitochondrion. Protein S12 is involved in the translation initiation step. This Pinus sylvestris (Scotch pine) protein is Small ribosomal subunit protein uS12m (RPS12).